A 356-amino-acid chain; its full sequence is tRNA N6-adenosine threonylcarbamoyltransferase (356 aa).

Histidine 114 and histidine 118 together coordinate Fe cation. Residues 136 to 140 (LVSGG), aspartate 169, glycine 182, and asparagine 280 contribute to the substrate site. Fe cation is bound at residue aspartate 308. Residues 333–356 (ARPRWPLDNSQPALLGSGKKGAKA) form a disordered region.

It belongs to the KAE1 / TsaD family. Requires Fe(2+) as cofactor.

It localises to the cytoplasm. It carries out the reaction L-threonylcarbamoyladenylate + adenosine(37) in tRNA = N(6)-L-threonylcarbamoyladenosine(37) in tRNA + AMP + H(+). In terms of biological role, required for the formation of a threonylcarbamoyl group on adenosine at position 37 (t(6)A37) in tRNAs that read codons beginning with adenine. Is involved in the transfer of the threonylcarbamoyl moiety of threonylcarbamoyl-AMP (TC-AMP) to the N6 group of A37, together with TsaE and TsaB. TsaD likely plays a direct catalytic role in this reaction. The sequence is that of tRNA N6-adenosine threonylcarbamoyltransferase from Dinoroseobacter shibae (strain DSM 16493 / NCIMB 14021 / DFL 12).